A 927-amino-acid polypeptide reads, in one-letter code: F-box only protein 11 (927 aa).

The tract at residues 1–132 is disordered; it reads MNSVRAANRR…STSTTENFGH (132 aa). Residues 7–16 are compositionally biased toward basic residues; that stretch reads ANRRPRRVSR. Over residues 17 to 27 the composition is skewed to low complexity; the sequence is PRPVQQQQQQP. Residues 28–68 are compositionally biased toward pro residues; that stretch reads PQQPPPQPPQQQPPQQQPPPPPQQQQQQQPPPPPPPPPPLP. Positions 114 to 129 are enriched in polar residues; the sequence is PTKNSMEGASTSTTEN. The region spanning 153-199 is the F-box domain; the sequence is QYLQEKLPDEVVLKIFSYLLEQDLCRAACVCKRFSELANDPILWKRL. 19 PbH1 repeats span residues 395-417, 418-440, 441-463, 464-486, 487-509, 510-532, 533-555, 556-578, 579-601, 602-624, 625-647, 648-670, 671-693, 694-716, 717-739, 740-762, 763-785, 786-808, and 809-830; these read GACP…YITD, HAQG…WVKN, HGNP…FTFD, HGMG…EVKA, YANP…YVHE, KGRG…WITS, NSDP…YIFG, DGRG…QIRT, NSCP…YVHE, KGQG…WVTT, GSTP…YFYD, NGHG…QIRT, GSNP…LVYN, SGLG…WIKT, DSNP…CIFN, GGRG…LIST, NSHP…EITN, HATA…FLAS, and GVNV…EKAV. Residues 833-904 form a UBR-type zinc finger; sequence GQCLYKISSY…LSNPCTLAGE (72 aa).

As to quaternary structure, component of the SCF(FBXO11) complex consisting of CUL1, RBX1, SKP1 and FBXO11. Interacts with CIITA. In terms of tissue distribution, isoform 5 is expressed in keratinocytes, fibroblasts and melanocytes.

Its subcellular location is the nucleus. It localises to the chromosome. Its pathway is protein modification; protein ubiquitination. Its function is as follows. Substrate recognition component of a SCF (SKP1-CUL1-F-box protein) E3 ubiquitin-protein ligase complex which mediates the ubiquitination and subsequent proteasomal degradation of target proteins, such as DTL/CDT2, BCL6, SNAI1 and PRDM1/BLIMP1. The SCF(FBXO11) complex mediates ubiquitination and degradation of BCL6, thereby playing a role in the germinal center B-cells terminal differentiation toward memory B-cells and plasma cells. The SCF(FBXO11) complex also mediates ubiquitination and degradation of DTL, an important step for the regulation of TGF-beta signaling, cell migration and the timing of the cell-cycle progression and exit. The SCF(FBXO11) complex also catalyzes ubiquitination and degradation of GSK3B-phosphorylated SNAI1. Binds to and neddylates phosphorylated p53/TP53, inhibiting its transcriptional activity. Plays a role in the regulatiom of erythropoiesis but not myelopoiesis or megakaryopoiesis. Mechanistically, activates erythroid genes by mediating the degradation of BAHD1, a heterochromatin-associated protein that recruits corepressors to H3K27me3 marks. Participates in macrophage cell death and inflammation in response to bacterial toxins by regulating the expression of complement 5a receptor 1/C5AR1 and IL-1beta. Acts as a critical regulator to determine the level of MHC-II by mediating the recognition of degron at the P/S/T domain of CIITA leading to its ubiquitination and subsequent degradation via the proteasome. Participates in the antiviral repsonse by initiating the activation of TBK1-IRF3-IFN-I axis. Mediates the 'Lys-63'-linked ubiquitination of TRAF3 to strengthen the interaction between TRAF3 and TBK1. This Homo sapiens (Human) protein is F-box only protein 11.